A 473-amino-acid chain; its full sequence is Dol-P-Glc:Glc(2)Man(9)GlcNAc(2)-PP-Dol alpha-1,2-glucosyltransferase (473 aa).

At 1–6 (MAQLEG) the chain is on the cytoplasmic side. The helical transmembrane segment at 7–27 (YYFSAALSCTFLVSCLLFSAF) threads the bilayer. Over 28–64 (SRALREPYMDEIFHLPQAQRYCEGHFSLSQWDPMITT) the chain is Extracellular. The chain crosses the membrane as a helical span at residues 65–85 (LPGLYLVSIGVIKPAIWIFGW). At 86–97 (SEHVVCSIGMLR) the chain is on the cytoplasmic side. Residues 98–118 (FVNLLFSVGNFYLLYLLFCKV) form a helical membrane-spanning segment. The Extracellular segment spans residues 119–130 (QPRNKAASSIQR). 2 helical membrane passes run 131-151 (VLSTLTLAVFPTLYFFNFLYY) and 152-172 (TEAGSMFFTLFAYLMCLYGNH). Topologically, residues 173 to 175 (KTS) are extracellular. The chain crosses the membrane as a helical span at residues 176–196 (AFLGFCGFMFRQTNIIWAVFC). Topologically, residues 197 to 249 (AGNVIAQKLTEAWKTELQKKEDRLPPIKGPFAEFRKILQFLLAYSMSFKNLSM) are cytoplasmic. Residues 250–270 (LLLLTWPYILLGFLFCAFVVV) traverse the membrane as a helical segment. The Extracellular segment spans residues 271–283 (NGGIVIGDRSSHE). A helical transmembrane segment spans residues 284–304 (ACLHFPQLFYFFSFTLFFSFP). The Cytoplasmic portion of the chain corresponds to 305 to 323 (HLLSPSKIKTFLSLVWKRR). Residues 324 to 344 (ILFFVVTLVSVFLVWKFTYAH) traverse the membrane as a helical segment. Residues 345–367 (KYLLADNRHYTFYVWKRVFQRYE) are Extracellular-facing. Residues 368 to 388 (TVKYLLVPAYIFAGWSIADSL) traverse the membrane as a helical segment. Residues 389-392 (KSKS) are Cytoplasmic-facing. Residues 393-413 (IFWNLMFFICLFTVIVPQKLL) traverse the membrane as a helical segment. The Extracellular portion of the chain corresponds to 414 to 436 (EFRYFILPYVIYRLNIPLPPTSR). Residues 437–457 (LICELSCYAVVNFITFFIFLN) traverse the membrane as a helical segment. Residues 458 to 473 (KTFQWPNSQDIQRFMW) lie on the Cytoplasmic side of the membrane.

Belongs to the ALG10 glucosyltransferase family.

It is found in the endoplasmic reticulum membrane. It catalyses the reaction an alpha-D-Glc-(1-&gt;3)-alpha-D-Glc-(1-&gt;3)-alpha-D-Man-(1-&gt;2)-alpha-D-Man-(1-&gt;2)-alpha-D-Man-(1-&gt;3)-[alpha-D-Man-(1-&gt;2)-alpha-D-Man-(1-&gt;3)-[alpha-D-Man-(1-&gt;2)-alpha-D-Man-(1-&gt;6)]-alpha-D-Man-(1-&gt;6)]-beta-D-Man-(1-&gt;4)-beta-D-GlcNAc-(1-&gt;4)-alpha-D-GlcNAc-diphospho-di-trans,poly-cis-dolichol + a di-trans,poly-cis-dolichyl beta-D-glucosyl phosphate = a alpha-D-Glc-(1-&gt;2)-alpha-D-Glc-(1-&gt;3)-alpha-D-Glc-(1-&gt;3)-alpha-D-Man-(1-&gt;2)-alpha-D-Man-(1-&gt;2)-alpha-D-Man-(1-&gt;3)-[alpha-D-Man-(1-&gt;2)-alpha-D-Man-(1-&gt;3)-[alpha-D-Man-(1-&gt;2)-alpha-D-Man-(1-&gt;6)]-alpha-D-Man-(1-&gt;6)]-beta-D-Man-(1-&gt;4)-beta-D-GlcNAc-(1-&gt;4)-alpha-D-GlcNAc-diphospho-di-trans,poly-cis-dolichol + a di-trans,poly-cis-dolichyl phosphate + H(+). The protein operates within protein modification; protein glycosylation. Its function is as follows. Dol-P-Glc:Glc(2)Man(9)GlcNAc(2)-PP-Dol alpha-1,2-glucosyltransferase that operates in the biosynthetic pathway of dolichol-linked oligosaccharides, the glycan precursors employed in protein asparagine (N)-glycosylation. The assembly of dolichol-linked oligosaccharides begins on the cytosolic side of the endoplasmic reticulum membrane and finishes in its lumen. The sequential addition of sugars to dolichol pyrophosphate produces dolichol-linked oligosaccharides containing fourteen sugars, including two GlcNAcs, nine mannoses and three glucoses. Once assembled, the oligosaccharide is transferred from the lipid to nascent proteins by oligosaccharyltransferases. In the lumen of the endoplasmic reticulum, adds the third and last glucose residue from dolichyl phosphate glucose (Dol-P-Glc) onto the lipid-linked oligosaccharide intermediate Glc(2)Man(9)GlcNAc(2)-PP-Dol to produce Glc(3)Man(9)GlcNAc(2)-PP-Dol. The protein is Dol-P-Glc:Glc(2)Man(9)GlcNAc(2)-PP-Dol alpha-1,2-glucosyltransferase of Homo sapiens (Human).